Reading from the N-terminus, the 361-residue chain is Probable U3 small nucleolar RNA-associated protein 11 (361 aa).

4 disordered regions span residues 1 to 52 (MTKG…KKRK), 200 to 235 (LMSG…TPET), 262 to 295 (KRES…TRLL), and 311 to 361 (RHVR…RRAR). Residues 17-33 (HLKRKTHLERSQPKSRQ) are compositionally biased toward basic residues. Basic and acidic residues-rich tracts occupy residues 37–46 (QLEKHKDHVL) and 217–228 (RREVQEKMRRSG). The segment covering 278–287 (DDGEQEEAAA) has biased composition (acidic residues). Basic and acidic residues predominate over residues 342–352 (RQMEQRRESRF).

Belongs to the UTP11 family. As to quaternary structure, component of the ribosomal small subunit (SSU) processome.

It is found in the nucleus. It localises to the nucleolus. In terms of biological role, involved in nucleolar processing of pre-18S ribosomal RNA. The sequence is that of Probable U3 small nucleolar RNA-associated protein 11 from Leishmania major.